Reading from the N-terminus, the 771-residue chain is Sarcolemmal membrane-associated protein (771 aa).

A necessary for targeting to centrosomes region spans residues 1–163; sequence MPSALAIFTC…AANTPSMYSQ (163 aa). The Cytoplasmic segment spans residues 1 to 745; that stretch reads MPSALAIFTC…EKGNNNKPWP (745 aa). Residues 28-85 form the FHA domain; that stretch reads IKIGRSVARCRPAQNNATFDCKVLSRNHALVWFDHKTGKFYLQDTKSSNGTFINSQRL. S148 bears the Phosphoserine mark. Coiled coils occupy residues 167-202 and 230-381; these read QLSQ…ASDT and NQTE…QEHL. A compositionally biased stretch (basic and acidic residues) spans 420-429; sequence ENQARAKESD. A disordered region spans residues 420–450; the sequence is ENQARAKESDLSDTLSPSKEKSSDDTTDAQM. Residues S431 and S435 each carry the phosphoserine modification. Residues 452–742 are a coiled coil; that stretch reads EQDLNESLAK…LLQEKGNNNK (291 aa). The helical; Anchor for type IV membrane protein transmembrane segment at 746–766 threads the bilayer; sequence WMPMLAALVAVTAIVLYVPGL. Topologically, residues 767 to 771 are extracellular; it reads ARASP.

The protein belongs to the SLMAP family. As to quaternary structure, homodimer. Interacts with myosin. Interacts with SIKE1 and both associate with the STRIPAK core complex composed of PP2A catalytic and scaffolding subunits, the striatins (PP2A regulatory subunits), the striatin-associated proteins MOB4, STRIP1 and STRIP2, PDCD10 and members of the STE20 kinases, such as STK24 and STK26. Interacts (via FHA domain) with STK3 (when phosphorylated); the interaction associates STK3 with the STRIPAK complex. Expressed in heart (at protein level). Expressed in heart, skeletal muscle, smooth muscle, kidney, spleen, pancreas and brain.

The protein resides in the cell membrane. Its subcellular location is the sarcolemma. It localises to the cytoplasm. It is found in the myofibril. The protein localises to the sarcomere. The protein resides in the m line. Its subcellular location is the z line. It localises to the cytoskeleton. It is found in the microtubule organizing center. The protein localises to the centrosome. The protein resides in the endoplasmic reticulum membrane. Its subcellular location is the mitochondrion membrane. Associates with the striatin-interacting phosphatase and kinase (STRIPAK) core complex, forming the extended (SIKE1:SLMAP)STRIPAK complex. The (SIKE1:SLMAP)STRIPAK complex dephosphorylates STK3 leading to the inhibition of Hippo signaling and the control of cell growth. May play a role during myoblast fusion. This Oryctolagus cuniculus (Rabbit) protein is Sarcolemmal membrane-associated protein (SLMAP).